A 607-amino-acid chain; its full sequence is CUB and zona pellucida-like domain-containing protein 1 (607 aa).

The signal sequence occupies residues 1 to 24 (MELVRRLMPLTLLILSCLAELTMA). A disulfide bond links cysteine 17 and cysteine 58. CUB domains are found at residues 25–146 (EAEG…YFFS) and 154–265 (CGGY…YTSI). Topologically, residues 25–568 (EAEGNASCTV…EETPNQPFNS (544 aa)) are lumenal. N-linked (GlcNAc...) asparagine glycans are attached at residues asparagine 29, asparagine 57, and asparagine 67. Intrachain disulfides connect cysteine 85-cysteine 107, cysteine 154-cysteine 180, and cysteine 207-cysteine 229. The 244-residue stretch at 276-519 (TCSSDRMRVI…SRCNQGCVSR (244 aa)) folds into the ZP domain. 2 N-linked (GlcNAc...) asparagine glycosylation sites follow: asparagine 394 and asparagine 419. The cysteines at positions 442 and 498 are disulfide-linked. Residues 569-589 (VHLFSFMVLALNVVTVATITV) traverse the membrane as a helical segment. The Cytoplasmic portion of the chain corresponds to 590–607 (RHFVNQRADYKYQKLQNY).

As to expression, detected in pancreas and epithelium of ovary. Expressed at higher levels in ovarian tumors than in normal tissue.

The protein localises to the zymogen granule membrane. In terms of biological role, localized to zymogen granules, where it functions in trypsinogen activation. May indirectly regulate cell motility, cell-cell and cell/extracellular matrix interactions. This is CUB and zona pellucida-like domain-containing protein 1 from Homo sapiens (Human).